The chain runs to 176 residues: MNTCTPNIKSSYTYEDLLASGRGELFGKEGPQLPAPTMLMMDRINLMTENGGLFDKGYIEAELDIHPDLPFFSCHFIGDPVMPGCLGLDAMWQLVGFFLGWIGGKGKGRALGVGEVKFTGQILPNAKKVTYRIHMKRVINRKLVMGMADGEVEVDGRVIYTATDLKVGLFQDTSAF.

Residue H75 is part of the active site.

It belongs to the thioester dehydratase family. FabA subfamily. Homodimer.

The protein resides in the cytoplasm. The enzyme catalyses a (3R)-hydroxyacyl-[ACP] = a (2E)-enoyl-[ACP] + H2O. The catalysed reaction is (3R)-hydroxydecanoyl-[ACP] = (2E)-decenoyl-[ACP] + H2O. It carries out the reaction (2E)-decenoyl-[ACP] = (3Z)-decenoyl-[ACP]. Its pathway is lipid metabolism; fatty acid biosynthesis. Necessary for the introduction of cis unsaturation into fatty acids. Catalyzes the dehydration of (3R)-3-hydroxydecanoyl-ACP to E-(2)-decenoyl-ACP and then its isomerization to Z-(3)-decenoyl-ACP. Can catalyze the dehydratase reaction for beta-hydroxyacyl-ACPs with saturated chain lengths up to 16:0, being most active on intermediate chain length. The protein is 3-hydroxydecanoyl-[acyl-carrier-protein] dehydratase of Actinobacillus pleuropneumoniae serotype 5b (strain L20).